The primary structure comprises 1128 residues: Major DNA-binding protein (1128 aa).

The segment at 1104–1128 (LGGGGQGSGGRRKRRLATVLPGLEV) is required for nuclear localization.

Belongs to the herpesviridae major DNA-binding protein family. Homooligomers. Forms double-helical filaments necessary for the formation of replication compartments within the host nucleus. Interacts with the origin-binding protein. Interacts with the helicase primase complex; this interaction stimulates primer synthesis activity of the helicase-primase complex. Interacts with the DNA polymerase. Interacts with the alkaline exonuclease; this interaction increases its nuclease processivity.

It is found in the virion tegument. The protein localises to the host nucleus. In terms of biological role, plays several crucial roles in viral infection. Participates in the opening of the viral DNA origin to initiate replication by interacting with the origin-binding protein. May disrupt loops, hairpins and other secondary structures present on ssDNA to reduce and eliminate pausing of viral DNA polymerase at specific sites during elongation. Promotes viral DNA recombination by performing strand-transfer, characterized by the ability to transfer a DNA strand from a linear duplex to a complementary single-stranded DNA circle. Can also catalyze the renaturation of complementary single strands. Additionally, reorganizes the host cell nucleus, leading to the formation of prereplicative sites and replication compartments. This process is driven by the protein which can form double-helical filaments in the absence of DNA. The polypeptide is Major DNA-binding protein (Homo sapiens (Human)).